The following is a 600-amino-acid chain: Cytidine monophosphate-N-acetylneuraminic acid hydroxylase (600 aa).

The region spanning 9-107 (LSPVEVASLK…VEMDENNRLL (99 aa)) is the Rieske domain. Residues C49, H51, C70, and H73 each contribute to the [2Fe-2S] cluster site.

It belongs to the CMP-Neu5Ac hydroxylase family. Requires [2Fe-2S] cluster as cofactor.

Its subcellular location is the cytoplasm. The enzyme catalyses CMP-N-acetyl-beta-neuraminate + 2 Fe(II)-[cytochrome b5] + O2 + 2 H(+) = CMP-N-glycoloyl-beta-neuraminate + 2 Fe(III)-[cytochrome b5] + H2O. It functions in the pathway amino-sugar metabolism; N-acetylneuraminate metabolism. Functionally, sialic acids are components of carbohydrate chains of glycoconjugates and are involved in cell-cell recognition and cell-pathogen interactions. Catalyzes the conversion of CMP-N-acetylneuraminic acid (CMP-Neu5Ac) into its hydroxylated derivative CMP-N-glycolylneuraminic acid (CMP-Neu5Gc), a sialic acid abundantly expressed at the surface of many cells. This Pan paniscus (Pygmy chimpanzee) protein is Cytidine monophosphate-N-acetylneuraminic acid hydroxylase (CMAH).